A 331-amino-acid chain; its full sequence is Phosphoribosylformylglycinamidine cyclo-ligase (331 aa).

This sequence belongs to the AIR synthase family.

It is found in the cytoplasm. It catalyses the reaction 2-formamido-N(1)-(5-O-phospho-beta-D-ribosyl)acetamidine + ATP = 5-amino-1-(5-phospho-beta-D-ribosyl)imidazole + ADP + phosphate + H(+). It functions in the pathway purine metabolism; IMP biosynthesis via de novo pathway; 5-amino-1-(5-phospho-D-ribosyl)imidazole from N(2)-formyl-N(1)-(5-phospho-D-ribosyl)glycinamide: step 2/2. In Clostridium kluyveri (strain NBRC 12016), this protein is Phosphoribosylformylglycinamidine cyclo-ligase.